The following is a 228-amino-acid chain: Large ribosomal subunit protein uL3 (228 aa).

The disordered stretch occupies residues 135–159; that stretch reads MKSQRASHGNSRSHNVPGSIGMAQD. A compositionally biased stretch (polar residues) spans 140–150; the sequence is ASHGNSRSHNV. The residue at position 158 (Gln-158) is an N5-methylglutamine.

This sequence belongs to the universal ribosomal protein uL3 family. In terms of assembly, part of the 50S ribosomal subunit. Forms a cluster with proteins L14 and L19. Post-translationally, methylated by PrmB.

One of the primary rRNA binding proteins, it binds directly near the 3'-end of the 23S rRNA, where it nucleates assembly of the 50S subunit. The protein is Large ribosomal subunit protein uL3 of Albidiferax ferrireducens (strain ATCC BAA-621 / DSM 15236 / T118) (Rhodoferax ferrireducens).